Consider the following 274-residue polypeptide: Cell division protein FtsQ (274 aa).

Residues 1–24 are disordered; that stretch reads MRDLHAKKQRVPHNRVKKPPKERK. The Cytoplasmic segment spans residues 1-33; the sequence is MRDLHAKKQRVPHNRVKKPPKERKPINWGPILK. Residues 7–21 are compositionally biased toward basic residues; sequence KKQRVPHNRVKKPPK. Residues 34–56 form a helical membrane-spanning segment; that stretch reads FASRGFGGAALCAGLGFGGWQLY. Over 57-274 the chain is Periplasmic; sequence NLVSRTTLLR…YADKIIVKKV (218 aa). A POTRA domain is found at 65-133; that stretch reads LRLEAIEVSP…HTLSITVSER (69 aa).

The protein belongs to the FtsQ/DivIB family. FtsQ subfamily.

It is found in the cell inner membrane. Essential cell division protein. The sequence is that of Cell division protein FtsQ from Geobacter sp. (strain M21).